Reading from the N-terminus, the 284-residue chain is 2-dehydro-3-deoxyphosphooctonate aldolase (284 aa).

The protein belongs to the KdsA family.

It localises to the cytoplasm. The enzyme catalyses D-arabinose 5-phosphate + phosphoenolpyruvate + H2O = 3-deoxy-alpha-D-manno-2-octulosonate-8-phosphate + phosphate. It participates in carbohydrate biosynthesis; 3-deoxy-D-manno-octulosonate biosynthesis; 3-deoxy-D-manno-octulosonate from D-ribulose 5-phosphate: step 2/3. Its pathway is bacterial outer membrane biogenesis; lipopolysaccharide biosynthesis. The protein is 2-dehydro-3-deoxyphosphooctonate aldolase of Paraburkholderia xenovorans (strain LB400).